A 71-amino-acid chain; its full sequence is MAGENDLNDRVEALEVRLAYQDETIEALNQTVTAQWKQIDALTRQLAALSERLDQAESSAGAPANERPPHY.

The tract at residues 52-71 (RLDQAESSAGAPANERPPHY) is disordered.

It belongs to the SlyX family.

The polypeptide is Protein SlyX homolog (Rhodopseudomonas palustris (strain ATCC BAA-98 / CGA009)).